The chain runs to 91 residues: Mercuric transport protein periplasmic component (91 aa).

An N-terminal signal peptide occupies residues 1–19; the sequence is MKKLFASLALAAVVAPVWA. The region spanning 22–88 is the HMA domain; sequence QTVTLSVPGM…ATADAGYPSS (67 aa). Residues Cys-33 and Cys-36 each contribute to the Hg(2+) site.

Belongs to the MerP family. As to quaternary structure, monomer.

It localises to the periplasm. In terms of biological role, involved in mercury resistance. Acts as a mercury scavenger that specifically binds to a mercuric ion in the periplasm and probably passes it to the cytoplasmic mercuric reductase MerA via the mercuric transport protein MerT. The polypeptide is Mercuric transport protein periplasmic component (Pseudomonas aeruginosa).